Consider the following 385-residue polypeptide: L-arabinitol 4-dehydrogenase (385 aa).

Positions 54, 79, 80, 109, 112, 115, 123, and 164 each coordinate Zn(2+). Residues 191–192 (PI), Asp212, Arg217, Ile292, and 316–318 (QYR) each bind NAD(+).

Belongs to the zinc-containing alcohol dehydrogenase family. In terms of assembly, homotetramer. It depends on Zn(2+) as a cofactor.

The catalysed reaction is L-arabinitol + NAD(+) = L-xylulose + NADH + H(+). The protein operates within carbohydrate degradation; L-arabinose degradation via L-arabinitol; D-xylulose 5-phosphate from L-arabinose (fungal route): step 2/5. In terms of biological role, catalyzes the NAD-dependent oxidation of L-arabinitol to L-xylulose in the fungal L-arabinose catabolic pathway. L-arabinose catabolism is important for using plant material as a carbon source. NADP cannot act as a cosubstrate. In Penicillium rubens (strain ATCC 28089 / DSM 1075 / NRRL 1951 / Wisconsin 54-1255) (Penicillium chrysogenum), this protein is L-arabinitol 4-dehydrogenase (lad1).